The primary structure comprises 145 residues: D-aminoacyl-tRNA deacylase (145 aa).

A Gly-cisPro motif, important for rejection of L-amino acids motif is present at residues 137-138 (GP).

It belongs to the DTD family. Homodimer.

It is found in the cytoplasm. The catalysed reaction is glycyl-tRNA(Ala) + H2O = tRNA(Ala) + glycine + H(+). It catalyses the reaction a D-aminoacyl-tRNA + H2O = a tRNA + a D-alpha-amino acid + H(+). An aminoacyl-tRNA editing enzyme that deacylates mischarged D-aminoacyl-tRNAs. Also deacylates mischarged glycyl-tRNA(Ala), protecting cells against glycine mischarging by AlaRS. Acts via tRNA-based rather than protein-based catalysis; rejects L-amino acids rather than detecting D-amino acids in the active site. By recycling D-aminoacyl-tRNA to D-amino acids and free tRNA molecules, this enzyme counteracts the toxicity associated with the formation of D-aminoacyl-tRNA entities in vivo and helps enforce protein L-homochirality. This is D-aminoacyl-tRNA deacylase from Erwinia tasmaniensis (strain DSM 17950 / CFBP 7177 / CIP 109463 / NCPPB 4357 / Et1/99).